Consider the following 349-residue polypeptide: DNA polymerase IV (349 aa).

Residues 4 to 185 (IIHIDCDCFY…LPVAKLHGVG (182 aa)) enclose the UmuC domain. Residues Asp-8 and Asp-103 each coordinate Mg(2+). Glu-104 is a catalytic residue.

Belongs to the DNA polymerase type-Y family. As to quaternary structure, monomer. Requires Mg(2+) as cofactor.

Its subcellular location is the cytoplasm. It catalyses the reaction DNA(n) + a 2'-deoxyribonucleoside 5'-triphosphate = DNA(n+1) + diphosphate. Its function is as follows. Poorly processive, error-prone DNA polymerase involved in untargeted mutagenesis. Copies undamaged DNA at stalled replication forks, which arise in vivo from mismatched or misaligned primer ends. These misaligned primers can be extended by PolIV. Exhibits no 3'-5' exonuclease (proofreading) activity. May be involved in translesional synthesis, in conjunction with the beta clamp from PolIII. The sequence is that of DNA polymerase IV from Pseudomonas aeruginosa (strain UCBPP-PA14).